We begin with the raw amino-acid sequence, 693 residues long: tRNA (guanine(37)-N(1))-methyltransferase (693 aa).

S-adenosyl-L-methionine contacts are provided by residues Arg-327, 365–366 (DI), and 392–393 (DA). The disordered stretch occupies residues 497–572 (AGDSHQSNSH…QKAEDAPTNE (76 aa)). The span at 500–512 (SHQSNSHQSNPHE) shows a compositional bias: low complexity. Asn-591 is an S-adenosyl-L-methionine binding site.

Belongs to the class I-like SAM-binding methyltransferase superfamily. TRM5/TYW2 family. In terms of assembly, monomer.

It localises to the mitochondrion matrix. The protein localises to the nucleus. It is found in the cytoplasm. The catalysed reaction is guanosine(37) in tRNA + S-adenosyl-L-methionine = N(1)-methylguanosine(37) in tRNA + S-adenosyl-L-homocysteine + H(+). Its function is as follows. Specifically methylates the N1 position of guanosine-37 in various cytoplasmic and mitochondrial tRNAs. Methylation is not dependent on the nature of the nucleoside 5' of the target nucleoside. This is the first step in the biosynthesis of wybutosine (yW), a modified base adjacent to the anticodon of tRNAs and required for accurate decoding. The chain is tRNA (guanine(37)-N(1))-methyltransferase from Plasmodium vivax (strain Salvador I).